We begin with the raw amino-acid sequence, 337 residues long: Biotin synthase (337 aa).

The region spanning Asn62–Arg289 is the Radical SAM core domain. [4Fe-4S] cluster-binding residues include Cys77, Cys81, and Cys84. Residues Cys121, Cys152, Cys212, and Arg284 each contribute to the [2Fe-2S] cluster site.

Belongs to the radical SAM superfamily. Biotin synthase family. As to quaternary structure, homodimer. [4Fe-4S] cluster serves as cofactor. It depends on [2Fe-2S] cluster as a cofactor.

It carries out the reaction (4R,5S)-dethiobiotin + (sulfur carrier)-SH + 2 reduced [2Fe-2S]-[ferredoxin] + 2 S-adenosyl-L-methionine = (sulfur carrier)-H + biotin + 2 5'-deoxyadenosine + 2 L-methionine + 2 oxidized [2Fe-2S]-[ferredoxin]. It participates in cofactor biosynthesis; biotin biosynthesis; biotin from 7,8-diaminononanoate: step 2/2. In terms of biological role, catalyzes the conversion of dethiobiotin (DTB) to biotin by the insertion of a sulfur atom into dethiobiotin via a radical-based mechanism. The sequence is that of Biotin synthase from Nitrosomonas europaea (strain ATCC 19718 / CIP 103999 / KCTC 2705 / NBRC 14298).